A 120-amino-acid polypeptide reads, in one-letter code: Immunoglobulin kappa variable 2D-29 (120 aa).

Residues 1 to 20 form the signal peptide; the sequence is MRLPAQLLGLLMLWIPGSSA. Residues 21–43 form a framework-1 region; the sequence is DIVMTQTPLSLSVTPGQPASISC. The Ig-like domain maps to 21–120; sequence DIVMTQTPLS…YYCMQSIQLP (100 aa). A disulfide bridge links Cys-43 with Cys-113. Positions 44–59 are complementarity-determining-1; the sequence is KSSQSLLHSDGKTYLY. Positions 60 to 74 are framework-2; the sequence is WYLQKPGQPPQLLIY. The tract at residues 75–81 is complementarity-determining-2; that stretch reads EVSNRFS. The tract at residues 82–113 is framework-3; sequence GVPDRFSGSGSGTDFTLKISRVEAEDVGVYYC. The segment at 114–120 is complementarity-determining-3; it reads MQSIQLP.

As to quaternary structure, immunoglobulins are composed of two identical heavy chains and two identical light chains; disulfide-linked.

The protein resides in the secreted. It localises to the cell membrane. V region of the variable domain of immunoglobulin light chains that participates in the antigen recognition. Immunoglobulins, also known as antibodies, are membrane-bound or secreted glycoproteins produced by B lymphocytes. In the recognition phase of humoral immunity, the membrane-bound immunoglobulins serve as receptors which, upon binding of a specific antigen, trigger the clonal expansion and differentiation of B lymphocytes into immunoglobulins-secreting plasma cells. Secreted immunoglobulins mediate the effector phase of humoral immunity, which results in the elimination of bound antigens. The antigen binding site is formed by the variable domain of one heavy chain, together with that of its associated light chain. Thus, each immunoglobulin has two antigen binding sites with remarkable affinity for a particular antigen. The variable domains are assembled by a process called V-(D)-J rearrangement and can then be subjected to somatic hypermutations which, after exposure to antigen and selection, allow affinity maturation for a particular antigen. This chain is Immunoglobulin kappa variable 2D-29, found in Homo sapiens (Human).